We begin with the raw amino-acid sequence, 118 residues long: Small ribosomal subunit protein uS13 (118 aa).

The segment at 94–118 is disordered; it reads NLPVRGQNTKNNARTRKGPIRSIKR. Residues 106-118 are compositionally biased toward basic residues; the sequence is ARTRKGPIRSIKR.

This sequence belongs to the universal ribosomal protein uS13 family. Part of the 30S ribosomal subunit. Forms a loose heterodimer with protein S19. Forms two bridges to the 50S subunit in the 70S ribosome.

Functionally, located at the top of the head of the 30S subunit, it contacts several helices of the 16S rRNA. In the 70S ribosome it contacts the 23S rRNA (bridge B1a) and protein L5 of the 50S subunit (bridge B1b), connecting the 2 subunits; these bridges are implicated in subunit movement. Contacts the tRNAs in the A and P-sites. The chain is Small ribosomal subunit protein uS13 from Psychrobacter sp. (strain PRwf-1).